We begin with the raw amino-acid sequence, 280 residues long: Ribosomal protein L11 methyltransferase (280 aa).

S-adenosyl-L-methionine-binding residues include Thr130, Gly151, Asp172, and Asn213.

The protein belongs to the methyltransferase superfamily. PrmA family.

It is found in the cytoplasm. The catalysed reaction is L-lysyl-[protein] + 3 S-adenosyl-L-methionine = N(6),N(6),N(6)-trimethyl-L-lysyl-[protein] + 3 S-adenosyl-L-homocysteine + 3 H(+). Methylates ribosomal protein L11. The sequence is that of Ribosomal protein L11 methyltransferase from Nitratiruptor sp. (strain SB155-2).